We begin with the raw amino-acid sequence, 175 residues long: NADH-quinone oxidoreductase subunit I (175 aa).

2 4Fe-4S ferredoxin-type domains span residues 69-98 (KRDE…IEAG) and 115-144 (KKFE…LDGP). Residues C78, C81, C84, C88, C124, C127, C130, and C134 each coordinate [4Fe-4S] cluster.

It belongs to the complex I 23 kDa subunit family. As to quaternary structure, NDH-1 is composed of 14 different subunits. Subunits NuoA, H, J, K, L, M, N constitute the membrane sector of the complex. [4Fe-4S] cluster serves as cofactor.

The protein localises to the cell inner membrane. The enzyme catalyses a quinone + NADH + 5 H(+)(in) = a quinol + NAD(+) + 4 H(+)(out). Its function is as follows. NDH-1 shuttles electrons from NADH, via FMN and iron-sulfur (Fe-S) centers, to quinones in the respiratory chain. The immediate electron acceptor for the enzyme in this species is believed to be ubiquinone. Couples the redox reaction to proton translocation (for every two electrons transferred, four hydrogen ions are translocated across the cytoplasmic membrane), and thus conserves the redox energy in a proton gradient. The sequence is that of NADH-quinone oxidoreductase subunit I from Leptospira borgpetersenii serovar Hardjo-bovis (strain JB197).